Consider the following 222-residue polypeptide: Eukaryotic translation initiation factor 3 subunit K (222 aa).

The region spanning 46 to 208 (YDLEANLAVL…KIKTKNITEK (163 aa)) is the PCI domain.

Belongs to the eIF-3 subunit K family. As to quaternary structure, component of the eukaryotic translation initiation factor 3 (eIF-3) complex. The eIF-3 complex interacts with pix.

It localises to the cytoplasm. Functionally, component of the eukaryotic translation initiation factor 3 (eIF-3) complex, which is involved in protein synthesis of a specialized repertoire of mRNAs and, together with other initiation factors, stimulates binding of mRNA and methionyl-tRNAi to the 40S ribosome. The eIF-3 complex specifically targets and initiates translation of a subset of mRNAs involved in cell proliferation. The protein is Eukaryotic translation initiation factor 3 subunit K of Drosophila virilis (Fruit fly).